Reading from the N-terminus, the 66-residue chain is Conotoxin mr5.2 (66 aa).

Residues 1-19 (MRCVPVFVILLLLIASAPT) form the signal peptide. Positions 20 to 48 (VDAQLKTKDDMPLASFHANVKRTLQILRD) are excised as a propeptide. Residues E57 and E61 each carry the 4-carboxyglutamate modification. Asparagine amide is present on N65.

Post-translationally, contains 2 disulfide bonds that can be either 'C1-C3, C2-C4' or 'C1-C4, C2-C3', since these disulfide connectivities have been observed for conotoxins with cysteine framework V (for examples, see AC P0DQQ7 and AC P81755). In terms of tissue distribution, expressed by the venom duct.

The protein resides in the secreted. This is Conotoxin mr5.2 from Conus marmoreus (Marble cone).